Reading from the N-terminus, the 1291-residue chain is MPRSDGFSPRKNLRRSARDHSRSYAGQCNEDFDDMYAPSSRRRSSGGVDGNGYTRSGRKINHNRYYEEEYHEAISSEEDERRYRTRRSSNSMTYRQQVMQAIDESKRNQKVPPAKRKRIYLSDEEEEDFAEAAHVENTVPERATRRSTRRRSSMHEELGVSEQEESPVRRTRKAAKRLGSEQPEENLAADDPLPMEGGGEIVLPIAEIDGMAEQENEDLIEKIGREEEEEGAEEDEQSGEKDPEEEEDDSSNAESSEESTAPRQYSLRRRQPVVQFNASEARENRRARLEHHRVANQNRHHRNRNGSRRRRSDSDSDSDDMVLPRPDKRQSRPHMHNRGERERGRFMPINMTEKELQSAQHILMDRMRKTDAGQGASDIDPMSVDSSVGFDQVGGLGHHIQSLKEVVLFPMLYPEVFEKFRINPPKGVVFYGPPGTGKTLVARALANECRRGANKVAFFMRKGADCLSKWVGESERQLRLLFDQAYAMRPSIIFFDEIDGLAPVRSSKQDQIHASIVSTLLALMDGLDGRGEVVVIGATNRLDTLDPALRRPGRFDRELRFSLPDLNARRQILDIHTSKWEENKPIPETLDAIAERTSGYCGADLKFLCTEAVLIGLRSRYPHIYMCSERLKLDVATIKITSEHFGHAMRRITPASRRDLTIPSRPLDERTSILLGDTVSNLISLRIPQGYRCVENAMATASSELEQVVRALEPNPTVPAIRLLLCGSEQLADGGQTSYVLPAILAKLDHLPVFSLSVSSLLTDGRPEEAFSNAIQSAMRASATGPCIMLLPSIDEWIKVIPVSVQHMLITCLESMTGFTPILFLSTLDTSFEDAPEYVTEIFRHANCITLNPSRRTIRQKYFEHVIEKINTPPKVFDPTVYEMPLPDDDSPDSKPSRKLNDDETRELLKMYTALQRQMRLFFKERLTRLMRDRRFVEFVEPVDPDEAEDYYEIIETPICMQDIMEKLNNCEYNHADKFVADLILIQTNALEYNPSTTKDGKLIRQMANTLRDAIDDLIECELDESFVERIETVSRMLQDAGVTPTSDKLLTEIPKGFARKKAWSMTNSLAKEIEQWTSEREAENQKMLSKLGVAAPTLELVVVPVEDMKSEEGTSTSTDGVPASAGNKKKLLKKKKGQKKSKTGESEEHDEDSTVEDAGEDTIVENLEIKKNQETPNSEHDIEMKDASKDSTPSVQISIAEKELIVSKPATCELIQCCVEKSEGWSVSELERLSSVLSHTIERFRDEWNRENLPAQLTQIVREWQTADDSNNTIVNGTLNKSNGNLANGH.

The tract at residues 1–345 (MPRSDGFSPR…HNRGERERGR (345 aa)) is disordered. Basic and acidic residues predominate over residues 64–82 (RYYEEEYHEAISSEEDERR). The segment covering 88 to 99 (SSNSMTYRQQVM) has biased composition (polar residues). Residues 226–257 (EEEEEGAEEDEQSGEKDPEEEEDDSSNAESSE) show a composition bias toward acidic residues. The segment covering 298–311 (NRHHRNRNGSRRRR) has biased composition (basic residues). ATP is bound at residue 432–439 (GPPGTGKT). Residues 914–1022 (ALQRQMRLFF…DAIDDLIECE (109 aa)) form the Bromo domain. The disordered stretch occupies residues 1110-1194 (KSEEGTSTST…MKDASKDSTP (85 aa)). Positions 1128–1142 (NKKKLLKKKKGQKKS) are enriched in basic residues. A compositionally biased stretch (acidic residues) spans 1148-1164 (EEHDEDSTVEDAGEDTI). Over residues 1168 to 1190 (LEIKKNQETPNSEHDIEMKDASK) the composition is skewed to basic and acidic residues.

The protein belongs to the AAA ATPase family.

In terms of biological role, thought to form a complex that enhances transcription from repetitive DNA sequences by modulating chromatin structure. The chain is Tat-binding homolog 7 (lex-1) from Caenorhabditis elegans.